The following is a 232-amino-acid chain: Ubiquinone biosynthesis O-methyltransferase (232 aa).

4 residues coordinate S-adenosyl-L-methionine: R36, G55, D76, and L120.

It belongs to the methyltransferase superfamily. UbiG/COQ3 family.

It catalyses the reaction a 3-demethylubiquinol + S-adenosyl-L-methionine = a ubiquinol + S-adenosyl-L-homocysteine + H(+). The catalysed reaction is a 3-(all-trans-polyprenyl)benzene-1,2-diol + S-adenosyl-L-methionine = a 2-methoxy-6-(all-trans-polyprenyl)phenol + S-adenosyl-L-homocysteine + H(+). It participates in cofactor biosynthesis; ubiquinone biosynthesis. O-methyltransferase that catalyzes the 2 O-methylation steps in the ubiquinone biosynthetic pathway. This Stutzerimonas stutzeri (strain A1501) (Pseudomonas stutzeri) protein is Ubiquinone biosynthesis O-methyltransferase.